A 425-amino-acid polypeptide reads, in one-letter code: Enolase (425 aa).

Gln-163 is a (2R)-2-phosphoglycerate binding site. The active-site Proton donor is the Glu-205. Mg(2+)-binding residues include Asp-242, Glu-285, and Asp-312. (2R)-2-phosphoglycerate is bound by residues Lys-337, Arg-366, Ser-367, and Lys-388. Lys-337 functions as the Proton acceptor in the catalytic mechanism.

It belongs to the enolase family. It depends on Mg(2+) as a cofactor.

Its subcellular location is the cytoplasm. The protein resides in the secreted. The protein localises to the cell surface. The catalysed reaction is (2R)-2-phosphoglycerate = phosphoenolpyruvate + H2O. The protein operates within carbohydrate degradation; glycolysis; pyruvate from D-glyceraldehyde 3-phosphate: step 4/5. Its function is as follows. Catalyzes the reversible conversion of 2-phosphoglycerate (2-PG) into phosphoenolpyruvate (PEP). It is essential for the degradation of carbohydrates via glycolysis. The chain is Enolase from Ruegeria pomeroyi (strain ATCC 700808 / DSM 15171 / DSS-3) (Silicibacter pomeroyi).